Consider the following 362-residue polypeptide: Cap-specific mRNA (nucleoside-2'-O-)-methyltransferase 1 (362 aa).

Residues 87–294 enclose the RrmJ-type SAM-dependent 2'-O-MTase domain; it reads SFGNRAGHKL…ERYLVCLGFL (208 aa). S-adenosyl-L-methionine is bound by residues Gly-130 and Asp-207. Lys-248 functions as the Proton acceptor in the catalytic mechanism.

It localises to the nucleus. The enzyme catalyses a 5'-end (N(7)-methyl 5'-triphosphoguanosine)-ribonucleoside in mRNA + S-adenosyl-L-methionine = a 5'-end (N(7)-methyl 5'-triphosphoguanosine)-(2'-O-methyl-ribonucleoside) in mRNA + S-adenosyl-L-homocysteine + H(+). In terms of biological role, S-adenosyl-L-methionine-dependent methyltransferase that mediates RNA cap1 2'-O-ribose methylation to the 5'-cap structure of spliced leader and U1 small nuclear RNAs. Methylates the ribose of the first nucleotide of a m(7)GpppG-capped RNA to produce m(7)GpppNmp (cap1). Cap1 modification is linked to higher levels of translation. Recognizes a guanosine cap on RNA independent of its N(7) methylation status. This Trypanosoma cruzi (strain CL Brener) protein is Cap-specific mRNA (nucleoside-2'-O-)-methyltransferase 1.